Here is a 288-residue protein sequence, read N- to C-terminus: Energy-coupling factor transporter ATP-binding protein EcfA2 (288 aa).

The region spanning 2–244 (IKFEKVNYTY…VDFLKAHELG (243 aa)) is the ABC transporter domain. 39–46 (GHTGSGKS) provides a ligand contact to ATP. E170 (proton acceptor) is an active-site residue.

It belongs to the ABC transporter superfamily. Energy-coupling factor EcfA family. Forms a stable energy-coupling factor (ECF) transporter complex composed of 2 membrane-embedded substrate-binding proteins (S component), 2 ATP-binding proteins (A component) and 2 transmembrane proteins (T component). In L.lactis forms a stable complex with EcfA' and EcfT and substrate-binding components. In E.coli forms a stable complex with EcfA, EcfT and individually with 3 tested substrate-binding components (BioY, NiaX and ThiT) with a stoichiometry of 1.1:1:1. The core ECF complex interacts with a number of substrate-specific binding components, including BioY, BioY2, HmpT, NiaX, PanT, QueT, RibU and ThiT.

It localises to the cell membrane. Its function is as follows. ATP-binding (A) component of a common energy-coupling factor (ECF) ABC-transporter complex. Unlike classic ABC transporters this ECF transporter provides the energy necessary to transport a number of different substrates. In this organism these probably include biotin, thiamine precursor, niacin, pantothenic acid, queuosine precursor, riboflavin and thiamine. Uptake of niacin or riboflavin into proteosomes containing EcfA1A2T and Niax or RibU has been demonstrated. Uptake requires hydrolyzable Mg-ATP and is substrate-specific; NiaX-containing proteosomes did not transport riboflavin. The protein is Energy-coupling factor transporter ATP-binding protein EcfA2 of Lactococcus lactis subsp. cremoris (strain MG1363).